We begin with the raw amino-acid sequence, 173 residues long: UPF0598 protein F59C6.12 (173 aa).

This sequence belongs to the UPF0598 family.

The chain is UPF0598 protein F59C6.12 from Caenorhabditis elegans.